The primary structure comprises 520 residues: Ribonuclease Y (520 aa).

Residues 5–25 form a helical membrane-spanning segment; the sequence is ITIISSLLFLIVGLVVGSLIF. The tract at residues 76-127 is disordered; it reads ELRGRRTETQKAENRLLQREENLDRKDTSLSKREATLERKEESISKRQQQIE. One can recognise a KH domain in the interval 210 to 273; that stretch reads TVSVVTLPND…EIARIALEKL (64 aa). One can recognise an HD domain in the interval 336–429; the sequence is VLNHSLEVSK…VAAADALSAA (94 aa).

The protein belongs to the RNase Y family.

It localises to the cell membrane. In terms of biological role, endoribonuclease that initiates mRNA decay. This is Ribonuclease Y from Listeria monocytogenes serotype 1/2a (strain 10403S).